Here is a 143-residue protein sequence, read N- to C-terminus: Large ribosomal subunit protein uL15 (143 aa).

The tract at residues 1–48 (MRLNTISPSKGAKHSSKRLGRGIGSGLGKTSGRGHKGQKARSGCSIHR) is disordered. The segment covering 11 to 20 (GAKHSSKRLG) has biased composition (basic residues). A compositionally biased stretch (gly residues) spans 21–31 (RGIGSGLGKTS).

The protein belongs to the universal ribosomal protein uL15 family. As to quaternary structure, part of the 50S ribosomal subunit.

In terms of biological role, binds to the 23S rRNA. This chain is Large ribosomal subunit protein uL15, found in Baumannia cicadellinicola subsp. Homalodisca coagulata.